The following is a 248-amino-acid chain: Ubiquinone biosynthesis O-methyltransferase (248 aa).

S-adenosyl-L-methionine-binding residues include Arg-41, Gly-72, Asp-93, and Met-136.

This sequence belongs to the methyltransferase superfamily. UbiG/COQ3 family.

The enzyme catalyses a 3-demethylubiquinol + S-adenosyl-L-methionine = a ubiquinol + S-adenosyl-L-homocysteine + H(+). The catalysed reaction is a 3-(all-trans-polyprenyl)benzene-1,2-diol + S-adenosyl-L-methionine = a 2-methoxy-6-(all-trans-polyprenyl)phenol + S-adenosyl-L-homocysteine + H(+). It functions in the pathway cofactor biosynthesis; ubiquinone biosynthesis. O-methyltransferase that catalyzes the 2 O-methylation steps in the ubiquinone biosynthetic pathway. This chain is Ubiquinone biosynthesis O-methyltransferase, found in Bartonella bacilliformis (strain ATCC 35685 / KC583 / Herrer 020/F12,63).